Consider the following 192-residue polypeptide: Ribonuclease HII (192 aa).

An RNase H type-2 domain is found at 2–187; it reads KNLCGIDEAG…KALGENEIGV (186 aa). A divalent metal cation-binding residues include Asp8, Glu9, and Asp97.

It belongs to the RNase HII family. The cofactor is Mn(2+). Requires Mg(2+) as cofactor.

The protein resides in the cytoplasm. It carries out the reaction Endonucleolytic cleavage to 5'-phosphomonoester.. Its function is as follows. Endonuclease that specifically degrades the RNA of RNA-DNA hybrids. This chain is Ribonuclease HII, found in Aliarcobacter butzleri (strain RM4018) (Arcobacter butzleri).